Here is a 156-residue protein sequence, read N- to C-terminus: MDKKVTEVVEAFAQPIVEELNLELVDVEYVKEGQDWFLRVFIDSEKGVDIEECGAVSERLSEALDKEDPIPHLYFLDVSSPGAERPLKKEKDFQQAVGKQVAIKTYEPIDGEKMFEGKLLSYDGTTITLLLTIKTRKKEIQISMDKVANARLAVTF.

The protein belongs to the RimP family.

It is found in the cytoplasm. In terms of biological role, required for maturation of 30S ribosomal subunits. The polypeptide is Ribosome maturation factor RimP (Bacillus cereus (strain B4264)).